Reading from the N-terminus, the 461-residue chain is Photosystem II CP43 reaction center protein (461 aa).

The propeptide occupies 1-2; the sequence is ME. N-acetylthreonine is present on threonine 3. Phosphothreonine is present on threonine 3. Helical transmembrane passes span 57 to 81, 122 to 143, 166 to 188, 243 to 263, and 279 to 300; these read LFEV…PHIA, LIGP…KDKN, KAMY…RVIT, TPWP…LSYS, and WFNN…ASQS. A [CaMn4O5] cluster-binding site is contributed by glutamate 355. A helical membrane pass occupies residues 435-459; the sequence is RARAAAAGFEKGIDRFDEPVLSMRP.

The protein belongs to the PsbB/PsbC family. PsbC subfamily. As to quaternary structure, PSII is composed of 1 copy each of membrane proteins PsbA, PsbB, PsbC, PsbD, PsbE, PsbF, PsbH, PsbI, PsbJ, PsbK, PsbL, PsbM, PsbT, PsbX, PsbY, PsbZ, Psb30/Ycf12, at least 3 peripheral proteins of the oxygen-evolving complex and a large number of cofactors. It forms dimeric complexes. Requires Binds multiple chlorophylls and provides some of the ligands for the Ca-4Mn-5O cluster of the oxygen-evolving complex. It may also provide a ligand for a Cl- that is required for oxygen evolution. PSII binds additional chlorophylls, carotenoids and specific lipids. as cofactor. Phosphorylated in vitro.

The protein resides in the plastid. Its subcellular location is the chloroplast thylakoid membrane. In terms of biological role, one of the components of the core complex of photosystem II (PSII). It binds chlorophyll and helps catalyze the primary light-induced photochemical processes of PSII. PSII is a light-driven water:plastoquinone oxidoreductase, using light energy to abstract electrons from H(2)O, generating O(2) and a proton gradient subsequently used for ATP formation. This is Photosystem II CP43 reaction center protein from Chlamydomonas reinhardtii (Chlamydomonas smithii).